The sequence spans 497 residues: ATP synthase subunit alpha 2 (497 aa).

An ATP-binding site is contributed by 167 to 174 (GERATGKT).

It belongs to the ATPase alpha/beta chains family. F-type ATPases have 2 components, CF(1) - the catalytic core - and CF(0) - the membrane proton channel. CF(1) has five subunits: alpha(3), beta(3), gamma(1), delta(1), epsilon(1). CF(0) has four main subunits: a(1), b(1), b'(1) and c(9-12).

It is found in the cell inner membrane. It catalyses the reaction ATP + H2O + 4 H(+)(in) = ADP + phosphate + 5 H(+)(out). Functionally, produces ATP from ADP in the presence of a proton gradient across the membrane. The alpha chain is a regulatory subunit. This is ATP synthase subunit alpha 2 from Cereibacter sphaeroides (strain ATCC 17029 / ATH 2.4.9) (Rhodobacter sphaeroides).